The chain runs to 71 residues: Small ribosomal subunit protein bS21 (71 aa).

It belongs to the bacterial ribosomal protein bS21 family.

The polypeptide is Small ribosomal subunit protein bS21 (Psychromonas ingrahamii (strain DSM 17664 / CCUG 51855 / 37)).